The following is a 392-amino-acid chain: Formate-dependent phosphoribosylglycinamide formyltransferase (392 aa).

N(1)-(5-phospho-beta-D-ribosyl)glycinamide-binding positions include 22 to 23 (EL) and glutamate 82. ATP is bound by residues arginine 114, lysine 155, 160–165 (SSGKGQ), 195–198 (EGVV), and glutamate 203. The ATP-grasp domain maps to 119 to 308 (RLAAEELQLP…EFALHVRAFL (190 aa)). Glutamate 267 and glutamate 279 together coordinate Mg(2+). Residues aspartate 286, lysine 355, and 362–363 (RR) each bind N(1)-(5-phospho-beta-D-ribosyl)glycinamide.

The protein belongs to the PurK/PurT family. As to quaternary structure, homodimer.

It carries out the reaction N(1)-(5-phospho-beta-D-ribosyl)glycinamide + formate + ATP = N(2)-formyl-N(1)-(5-phospho-beta-D-ribosyl)glycinamide + ADP + phosphate + H(+). The protein operates within purine metabolism; IMP biosynthesis via de novo pathway; N(2)-formyl-N(1)-(5-phospho-D-ribosyl)glycinamide from N(1)-(5-phospho-D-ribosyl)glycinamide (formate route): step 1/1. Its function is as follows. Involved in the de novo purine biosynthesis. Catalyzes the transfer of formate to 5-phospho-ribosyl-glycinamide (GAR), producing 5-phospho-ribosyl-N-formylglycinamide (FGAR). Formate is provided by PurU via hydrolysis of 10-formyl-tetrahydrofolate. In Shigella flexneri, this protein is Formate-dependent phosphoribosylglycinamide formyltransferase.